Here is a 319-residue protein sequence, read N- to C-terminus: Ribonuclease Z (319 aa).

Histidine 62, histidine 64, aspartate 66, histidine 67, histidine 145, aspartate 215, and histidine 273 together coordinate Zn(2+). The active-site Proton acceptor is the aspartate 66.

Belongs to the RNase Z family. In terms of assembly, homodimer. Requires Zn(2+) as cofactor.

The catalysed reaction is Endonucleolytic cleavage of RNA, removing extra 3' nucleotides from tRNA precursor, generating 3' termini of tRNAs. A 3'-hydroxy group is left at the tRNA terminus and a 5'-phosphoryl group is left at the trailer molecule.. Functionally, zinc phosphodiesterase, which displays some tRNA 3'-processing endonuclease activity. Probably involved in tRNA maturation, by removing a 3'-trailer from precursor tRNA. This is Ribonuclease Z from Borrelia duttonii (strain Ly).